Here is a 353-residue protein sequence, read N- to C-terminus: Cellulose-complementing protein (353 aa).

Disordered regions lie at residues methionine 1–phenylalanine 21, proline 75–valine 94, and alanine 117–proline 337. The span at alanine 80–proline 91 shows a compositional bias: pro residues. 2 stretches are compositionally biased toward low complexity: residues alanine 117–alanine 132 and isoleucine 142–alanine 164. Residues proline 165–proline 175 are compositionally biased toward pro residues. 2 stretches are compositionally biased toward polar residues: residues glutamine 196 to serine 226 and serine 278 to arginine 304.

The polypeptide is Cellulose-complementing protein (ccpAX) (Komagataeibacter xylinus (Gluconacetobacter xylinus)).